The primary structure comprises 149 residues: Large ribosomal subunit protein uL13 (149 aa).

The protein belongs to the universal ribosomal protein uL13 family. Part of the 50S ribosomal subunit.

In terms of biological role, this protein is one of the early assembly proteins of the 50S ribosomal subunit, although it is not seen to bind rRNA by itself. It is important during the early stages of 50S assembly. In Borrelia turicatae (strain 91E135), this protein is Large ribosomal subunit protein uL13.